The chain runs to 254 residues: Translation initiation factor 2 subunit alpha (254 aa).

Residues 10–81 (GDLVVVKITE…ERKNVDLSLK (72 aa)) enclose the S1 motif domain.

The protein belongs to the eIF-2-alpha family. As to quaternary structure, heterotrimer composed of an alpha, a beta and a gamma chain.

Functionally, eIF-2 functions in the early steps of protein synthesis by forming a ternary complex with GTP and initiator tRNA. This is Translation initiation factor 2 subunit alpha from Thermoplasma volcanium (strain ATCC 51530 / DSM 4299 / JCM 9571 / NBRC 15438 / GSS1).